A 95-amino-acid polypeptide reads, in one-letter code: MILQLFAHKKGVGSSRNGRDSESKRLGVKRSDGQFVLAGNILVRQRGTKIHPGANVGIGKDDTLFALIDGYVVFERKGRDKKQVSVYPERKVAQS.

Residues 1 to 6 (MILQLF) constitute a propeptide that is removed on maturation.

The protein belongs to the bacterial ribosomal protein bL27 family. The N-terminus is cleaved by ribosomal processing cysteine protease Prp.

The protein is Large ribosomal subunit protein bL27 of Caldanaerobacter subterraneus subsp. tengcongensis (strain DSM 15242 / JCM 11007 / NBRC 100824 / MB4) (Thermoanaerobacter tengcongensis).